Reading from the N-terminus, the 206-residue chain is Large ribosomal subunit protein uL4 (206 aa).

Residues 47 to 94 (NRAQKGRAEVSKSTRKPWRQKGTGRARAGMASSPLWRGGGRVFPNSPE) are disordered. Basic residues predominate over residues 59–70 (STRKPWRQKGTG).

Belongs to the universal ribosomal protein uL4 family. Part of the 50S ribosomal subunit.

Functionally, one of the primary rRNA binding proteins, this protein initially binds near the 5'-end of the 23S rRNA. It is important during the early stages of 50S assembly. It makes multiple contacts with different domains of the 23S rRNA in the assembled 50S subunit and ribosome. In terms of biological role, forms part of the polypeptide exit tunnel. This chain is Large ribosomal subunit protein uL4, found in Aromatoleum aromaticum (strain DSM 19018 / LMG 30748 / EbN1) (Azoarcus sp. (strain EbN1)).